The sequence spans 349 residues: S-adenosylmethionine:tRNA ribosyltransferase-isomerase (349 aa).

The protein belongs to the QueA family. As to quaternary structure, monomer.

It localises to the cytoplasm. The catalysed reaction is 7-aminomethyl-7-carbaguanosine(34) in tRNA + S-adenosyl-L-methionine = epoxyqueuosine(34) in tRNA + adenine + L-methionine + 2 H(+). It participates in tRNA modification; tRNA-queuosine biosynthesis. Functionally, transfers and isomerizes the ribose moiety from AdoMet to the 7-aminomethyl group of 7-deazaguanine (preQ1-tRNA) to give epoxyqueuosine (oQ-tRNA). The sequence is that of S-adenosylmethionine:tRNA ribosyltransferase-isomerase from Ruegeria sp. (strain TM1040) (Silicibacter sp.).